Reading from the N-terminus, the 379-residue chain is MTDPVALTADLIRCPSVTPEEGGALSLLEARLSAAGFACTRVDRNGIANLFARWGEKGHARSFGFNGHTDVVPVGARADWRFDPFGAQVEGDWMYGRGAVDMKSAVAAFAAAAMDFVADTPPDGAVILAITGDEEGDAKDGTVALLDWMAAQGEAMDVCLVGEPTCPDEMGEMMKIGRRGSMTFFFEALGVQGHSAYPHRAKNPLPALAKLVDRLAGLELDTGTDHFDPSTLAVTTFDTGNPANNVIPAACRATVNIRFNDAHSSESLTAMVRGIAAEVAAETGIEITDRVSVSGESFITPPGRLSDLVAAAVETETGRVPVLSTSGGTSDARFVQHHCPVVEFGLVGKSMHQVDERVAIAQIPQLKAIYTRILRDYFA.

His68 contributes to the Zn(2+) binding site. Asp70 is an active-site residue. Asp101 is a binding site for Zn(2+). The active-site Proton acceptor is Glu134. Residues Glu135, Glu163, and His352 each coordinate Zn(2+).

It belongs to the peptidase M20A family. DapE subfamily. In terms of assembly, homodimer. Zn(2+) serves as cofactor. Requires Co(2+) as cofactor.

It carries out the reaction N-succinyl-(2S,6S)-2,6-diaminopimelate + H2O = (2S,6S)-2,6-diaminopimelate + succinate. Its pathway is amino-acid biosynthesis; L-lysine biosynthesis via DAP pathway; LL-2,6-diaminopimelate from (S)-tetrahydrodipicolinate (succinylase route): step 3/3. Its function is as follows. Catalyzes the hydrolysis of N-succinyl-L,L-diaminopimelic acid (SDAP), forming succinate and LL-2,6-diaminopimelate (DAP), an intermediate involved in the bacterial biosynthesis of lysine and meso-diaminopimelic acid, an essential component of bacterial cell walls. The protein is Succinyl-diaminopimelate desuccinylase of Dinoroseobacter shibae (strain DSM 16493 / NCIMB 14021 / DFL 12).